Here is a 547-residue protein sequence, read N- to C-terminus: Alpha-humulene/(-)-(E)-beta-caryophyllene synthase (547 aa).

(2E,6E)-farnesyl diphosphate-binding residues include R262, D299, D303, R442, and D445. Positions 299 and 303 each coordinate Mg(2+). The DDXXD motif motif lies at 299-303; the sequence is DDMYD. 4 residues coordinate Mg(2+): D445, D446, S449, and E453.

This sequence belongs to the terpene synthase family. Tpsa subfamily. In terms of assembly, monomer. The cofactor is Mg(2+). It depends on Mn(2+) as a cofactor. Expressed exclusively in flowers. Expressed in the flower stigmata and also detected in the mesocarp cell layers of the silique wall.

Its subcellular location is the cytoplasm. The enzyme catalyses (2E,6E)-farnesyl diphosphate = (-)-(E)-beta-caryophyllene + diphosphate. The catalysed reaction is (2E,6E)-farnesyl diphosphate = alpha-copaene + diphosphate. It carries out the reaction (2E,6E)-farnesyl diphosphate = alpha-humulene + diphosphate. It catalyses the reaction (2E,6E)-farnesyl diphosphate = (1S,2S,4R)-beta-elemene + diphosphate. It participates in secondary metabolite biosynthesis; terpenoid biosynthesis. In terms of biological role, involved in sesquiterpene (C15) biosynthesis. The major products are beta-caryophyllene and alpha-humulene. Does not convert geranyl diphosphate (GPP) to any monoterpenes. The chain is Alpha-humulene/(-)-(E)-beta-caryophyllene synthase from Arabidopsis thaliana (Mouse-ear cress).